Reading from the N-terminus, the 216-residue chain is 3-isopropylmalate dehydratase small subunit (216 aa).

It belongs to the LeuD family. LeuD type 1 subfamily. In terms of assembly, heterodimer of LeuC and LeuD.

It carries out the reaction (2R,3S)-3-isopropylmalate = (2S)-2-isopropylmalate. It participates in amino-acid biosynthesis; L-leucine biosynthesis; L-leucine from 3-methyl-2-oxobutanoate: step 2/4. Catalyzes the isomerization between 2-isopropylmalate and 3-isopropylmalate, via the formation of 2-isopropylmaleate. The polypeptide is 3-isopropylmalate dehydratase small subunit (Albidiferax ferrireducens (strain ATCC BAA-621 / DSM 15236 / T118) (Rhodoferax ferrireducens)).